A 91-amino-acid chain; its full sequence is Small ribosomal subunit protein uS15 (91 aa).

The protein belongs to the universal ribosomal protein uS15 family. Part of the 30S ribosomal subunit. Forms a bridge to the 50S subunit in the 70S ribosome, contacting the 23S rRNA.

Functionally, one of the primary rRNA binding proteins, it binds directly to 16S rRNA where it helps nucleate assembly of the platform of the 30S subunit by binding and bridging several RNA helices of the 16S rRNA. Its function is as follows. Forms an intersubunit bridge (bridge B4) with the 23S rRNA of the 50S subunit in the ribosome. The chain is Small ribosomal subunit protein uS15 from Nautilia profundicola (strain ATCC BAA-1463 / DSM 18972 / AmH).